A 276-amino-acid polypeptide reads, in one-letter code: Large ribosomal subunit protein uL2 (276 aa).

Positions 218 to 255 (PTVRGSAMNPCDHPHGGGEGRTPIGMSSPVTPWGKPAL) are disordered.

Belongs to the universal ribosomal protein uL2 family. In terms of assembly, part of the 50S ribosomal subunit. Forms a bridge to the 30S subunit in the 70S ribosome.

Functionally, one of the primary rRNA binding proteins. Required for association of the 30S and 50S subunits to form the 70S ribosome, for tRNA binding and peptide bond formation. It has been suggested to have peptidyltransferase activity; this is somewhat controversial. Makes several contacts with the 16S rRNA in the 70S ribosome. This is Large ribosomal subunit protein uL2 from Clostridium tetani (strain Massachusetts / E88).